The primary structure comprises 31 residues: Photosystem II reaction center protein T (31 aa).

A helical transmembrane segment spans residues 3 to 23; sequence SFAYVLILTFAIATLFFAIAF.

The protein belongs to the PsbT family. In terms of assembly, PSII is composed of 1 copy each of membrane proteins PsbA, PsbB, PsbC, PsbD, PsbE, PsbF, PsbH, PsbI, PsbJ, PsbK, PsbL, PsbM, PsbT, PsbX, PsbY, PsbZ, Psb30/Ycf12, peripheral proteins PsbO, CyanoQ (PsbQ), PsbU, PsbV and a large number of cofactors. It forms dimeric complexes.

It localises to the cellular thylakoid membrane. In terms of biological role, found at the monomer-monomer interface of the photosystem II (PS II) dimer, plays a role in assembly and dimerization of PSII. PSII is a light-driven water plastoquinone oxidoreductase, using light energy to abstract electrons from H(2)O, generating a proton gradient subsequently used for ATP formation. The sequence is that of Photosystem II reaction center protein T from Synechococcus sp. (strain CC9902).